A 671-amino-acid chain; its full sequence is Autophagy-related protein 22-2 (671 aa).

Composition is skewed to polar residues over residues 1-10 (MVPRNFSESQ) and 19-34 (PSNS…SSSF). A disordered region spans residues 1–67 (MVPRNFSESQ…RDVPAQYAGE (67 aa)). 2 N-linked (GlcNAc...) asparagine glycosylation sites follow: asparagine 5 and asparagine 21. Positions 39–60 (ERSSSADHDSMGPDIGSAHRDV) are enriched in basic and acidic residues. 4 helical membrane-spanning segments follow: residues 83–103 (YGFA…PITL), 155–175 (SFAM…VVSI), 188–208 (LLLF…TVVP), and 212–232 (LLGA…FVLL). Residues 251–271 (PDFSPEFRPSSVDESPPEHSL) form a disordered region. A helical membrane pass occupies residues 324 to 344 (IGIGYSAGLFLQCVSIVIIWL). The N-linked (GlcNAc...) asparagine glycan is linked to asparagine 346. Helical transmembrane passes span 354 to 374 (LVLF…ALWL), 422 to 442 (FFLA…GTAV), 457 to 477 (GLIN…WAAI), 491 to 511 (ACIC…LPIV), 523 to 543 (WEMY…SSYC), 560 to 582 (YALY…GAIV), and 591 to 611 (AFWF…FVNV). A disordered region spans residues 634 to 671 (ESAGEGSRGSSIDHESGQNEGLIYPRVGENAGRGRNDI).

It belongs to the ATG22 family.

Its subcellular location is the vacuole membrane. Its function is as follows. Vacuolar effluxer which mediate the efflux of amino acids resulting from autophagic degradation. The release of autophagic amino acids allows the maintenance of protein synthesis and viability during nitrogen starvation. In Sclerotinia sclerotiorum (strain ATCC 18683 / 1980 / Ss-1) (White mold), this protein is Autophagy-related protein 22-2 (atg22-2).